A 188-amino-acid polypeptide reads, in one-letter code: Phosphatidylinositol N-acetylglucosaminyltransferase subunit H (188 aa).

It belongs to the PIGH family. As to quaternary structure, component of the glycosylphosphatidylinositol-N-acetylglucosaminyltransferase (GPI-GnT) complex composed at least by PIGA, PIGC, PIGH, PIGP, PIGQ, PIGY and DPM2. Interacts with PIGQ.

It localises to the cytoplasm. It functions in the pathway glycolipid biosynthesis; glycosylphosphatidylinositol-anchor biosynthesis. Functionally, part of the glycosylphosphatidylinositol-N-acetylglucosaminyltransferase (GPI-GnT) complex that catalyzes the transfer of N-acetylglucosamine from UDP-N-acetylglucosamine to phosphatidylinositol and participates in the first step of GPI biosynthesis. The sequence is that of Phosphatidylinositol N-acetylglucosaminyltransferase subunit H from Mus musculus (Mouse).